The primary structure comprises 507 residues: Histidine ammonia-lyase (507 aa).

The segment at residues 141–143 is a cross-link (5-imidazolinone (Ala-Gly)); sequence ASG. Ser-142 carries the 2,3-didehydroalanine (Ser) modification.

It belongs to the PAL/histidase family. Contains an active site 4-methylidene-imidazol-5-one (MIO), which is formed autocatalytically by cyclization and dehydration of residues Ala-Ser-Gly.

Its subcellular location is the cytoplasm. The enzyme catalyses L-histidine = trans-urocanate + NH4(+). It participates in amino-acid degradation; L-histidine degradation into L-glutamate; N-formimidoyl-L-glutamate from L-histidine: step 1/3. This chain is Histidine ammonia-lyase, found in Natranaerobius thermophilus (strain ATCC BAA-1301 / DSM 18059 / JW/NM-WN-LF).